The sequence spans 901 residues: Protein translocase subunit SecA 1 (901 aa).

ATP contacts are provided by residues Gln-87, 105–109 (GEGKT), and Asp-500. The disordered stretch occupies residues 847–901 (LNHPESGSWGGEGEGPSSEGAPHLPFKRDGEKVGRNQACPCGSGKKYKQCCGKLS). Zn(2+)-binding residues include Cys-885, Cys-887, Cys-896, and Cys-897.

This sequence belongs to the SecA family. Monomer and homodimer. Part of the essential Sec protein translocation apparatus which comprises SecA, SecYEG and auxiliary proteins SecDF-YajC and YidC. It depends on Zn(2+) as a cofactor.

The protein localises to the cell inner membrane. The protein resides in the cytoplasm. It catalyses the reaction ATP + H2O + cellular proteinSide 1 = ADP + phosphate + cellular proteinSide 2.. In terms of biological role, part of the Sec protein translocase complex. Interacts with the SecYEG preprotein conducting channel. Has a central role in coupling the hydrolysis of ATP to the transfer of proteins into and across the cell membrane, serving both as a receptor for the preprotein-SecB complex and as an ATP-driven molecular motor driving the stepwise translocation of polypeptide chains across the membrane. The protein is Protein translocase subunit SecA 1 of Magnetococcus marinus (strain ATCC BAA-1437 / JCM 17883 / MC-1).